We begin with the raw amino-acid sequence, 434 residues long: Nicotinate phosphoribosyltransferase (434 aa).

His242 is modified (phosphohistidine; by autocatalysis).

Belongs to the NAPRTase family. Transiently phosphorylated on a His residue during the reaction cycle. Phosphorylation strongly increases the affinity for substrates and increases the rate of nicotinate D-ribonucleotide production. Dephosphorylation regenerates the low-affinity form of the enzyme, leading to product release.

It catalyses the reaction nicotinate + 5-phospho-alpha-D-ribose 1-diphosphate + ATP + H2O = nicotinate beta-D-ribonucleotide + ADP + phosphate + diphosphate. It functions in the pathway cofactor biosynthesis; NAD(+) biosynthesis; nicotinate D-ribonucleotide from nicotinate: step 1/1. In terms of biological role, catalyzes the synthesis of beta-nicotinate D-ribonucleotide from nicotinate and 5-phospho-D-ribose 1-phosphate at the expense of ATP. The protein is Nicotinate phosphoribosyltransferase of Rhizobium etli (strain ATCC 51251 / DSM 11541 / JCM 21823 / NBRC 15573 / CFN 42).